A 193-amino-acid chain; its full sequence is Holliday junction branch migration complex subunit RuvA (193 aa).

Residues 1 to 64 (MIGRIQGTLV…EDAQQLFGFA (64 aa)) are domain I. Residues 65–139 (TETEREAFRQ…GKLAPDLGVA (75 aa)) form a domain II region. The flexible linker stretch occupies residues 139-143 (AGGKP). The interval 144–193 (QAIETSSEVLQALLALGYSEKEALLALKQIPADTSISDGIRMGLKYLSKA) is domain III.

The protein belongs to the RuvA family. In terms of assembly, homotetramer. Forms an RuvA(8)-RuvB(12)-Holliday junction (HJ) complex. HJ DNA is sandwiched between 2 RuvA tetramers; dsDNA enters through RuvA and exits via RuvB. An RuvB hexamer assembles on each DNA strand where it exits the tetramer. Each RuvB hexamer is contacted by two RuvA subunits (via domain III) on 2 adjacent RuvB subunits; this complex drives branch migration. In the full resolvosome a probable DNA-RuvA(4)-RuvB(12)-RuvC(2) complex forms which resolves the HJ.

The protein localises to the cytoplasm. Its function is as follows. The RuvA-RuvB-RuvC complex processes Holliday junction (HJ) DNA during genetic recombination and DNA repair, while the RuvA-RuvB complex plays an important role in the rescue of blocked DNA replication forks via replication fork reversal (RFR). RuvA specifically binds to HJ cruciform DNA, conferring on it an open structure. The RuvB hexamer acts as an ATP-dependent pump, pulling dsDNA into and through the RuvAB complex. HJ branch migration allows RuvC to scan DNA until it finds its consensus sequence, where it cleaves and resolves the cruciform DNA. The sequence is that of Holliday junction branch migration complex subunit RuvA from Polynucleobacter necessarius subsp. necessarius (strain STIR1).